The sequence spans 386 residues: Outer membrane protein assembly factor BamB (386 aa).

The N-terminal stretch at 1–25 (MMRNSRPGRAWRGAVVLTGLLALSG) is a signal peptide. Residue C26 is the site of N-palmitoyl cysteine attachment. C26 carries the S-diacylglycerol cysteine lipid modification.

Belongs to the BamB family. As to quaternary structure, part of the Bam complex.

It is found in the cell outer membrane. Functionally, part of the outer membrane protein assembly complex, which is involved in assembly and insertion of beta-barrel proteins into the outer membrane. The protein is Outer membrane protein assembly factor BamB of Bordetella pertussis (strain Tohama I / ATCC BAA-589 / NCTC 13251).